The primary structure comprises 313 residues: Fe-S cluster assembly protein dre2 (313 aa).

2 disordered regions span residues 1-25 (MSIT…SQKR) and 151-187 (GRKK…AQNN). The N-terminal SAM-like domain stretch occupies residues 20–145 (NGSQKRNLLL…FEKPVQEAAV (126 aa)). The interval 146 to 203 (PLKLGGRKKKDKTNGVNGVQNGVATNGASTNGVGMFDPAQNNDDELIDEDALLSDDDL) is linker. Positions 159–177 (NGVNGVQNGVATNGASTNG) are enriched in polar residues. [2Fe-2S] cluster-binding residues include Cys213, Cys225, Cys228, and Cys230. Positions 213–230 (CVPETAKKRRRPCKDCTC) are fe-S binding site A. [4Fe-4S] cluster-binding residues include Cys276, Cys279, Cys287, and Cys290. Short sequence motifs (cx2C motif) lie at residues 276–279 (CNSC) and 287–290 (CSSC). Positions 276–290 (CNSCSLGDAFRCSSC) are fe-S binding site B.

The protein belongs to the anamorsin family. Monomer. Interacts with tah18. Interacts with mia40. Requires [2Fe-2S] cluster as cofactor. It depends on [4Fe-4S] cluster as a cofactor.

The protein localises to the cytoplasm. It is found in the mitochondrion intermembrane space. Component of the cytosolic iron-sulfur (Fe-S) protein assembly (CIA) machinery required for the maturation of extramitochondrial Fe-S proteins. Part of an electron transfer chain functioning in an early step of cytosolic Fe-S biogenesis, facilitating the de novo assembly of a [4Fe-4S] cluster on the scaffold complex cfd1-nbp35. Electrons are transferred to dre2 from NADPH via the FAD- and FMN-containing protein tah18. Tah18-dre2 are also required for the assembly of the diferric tyrosyl radical cofactor of ribonucleotide reductase (RNR), probably by providing electrons for reduction during radical cofactor maturation in the catalytic small subunit rnr2. The sequence is that of Fe-S cluster assembly protein dre2 from Aspergillus oryzae (strain ATCC 42149 / RIB 40) (Yellow koji mold).